Consider the following 838-residue polypeptide: 1,4-alpha-glucan branching enzyme GlgB 1 (838 aa).

Basic and acidic residues predominate over residues 1-11 (MIPRPPSDDRA). Disordered stretches follow at residues 1 to 98 (MIPR…VSKK) and 116 to 142 (PVSP…SVLG). Residues 29-57 (KKAAAAKKTAGKKATPAAKATAAKGAVTK) are compositionally biased toward low complexity. D513 serves as the catalytic Nucleophile. E566 serves as the catalytic Proton donor. Positions 793-822 (TDGARYGGSDVTNPHPVKPEPQGRHGRPAS) are disordered.

Belongs to the glycosyl hydrolase 13 family. GlgB subfamily. In terms of assembly, monomer.

The catalysed reaction is Transfers a segment of a (1-&gt;4)-alpha-D-glucan chain to a primary hydroxy group in a similar glucan chain.. It participates in glycan biosynthesis; glycogen biosynthesis. Catalyzes the formation of the alpha-1,6-glucosidic linkages in glycogen by scission of a 1,4-alpha-linked oligosaccharide from growing alpha-1,4-glucan chains and the subsequent attachment of the oligosaccharide to the alpha-1,6 position. This Streptomyces avermitilis (strain ATCC 31267 / DSM 46492 / JCM 5070 / NBRC 14893 / NCIMB 12804 / NRRL 8165 / MA-4680) protein is 1,4-alpha-glucan branching enzyme GlgB 1.